We begin with the raw amino-acid sequence, 618 residues long: DNA mismatch repair protein MutL (618 aa).

A compositionally biased stretch (polar residues) spans 348–359; that stretch reads QTDTARSPTGNF. The tract at residues 348–400 is disordered; the sequence is QTDTARSPTGNFESGEVFDYPKSQLQPSHSVSSGGASLGSRSAGGSGGAYRAT. The span at 377–388 shows a compositional bias: low complexity; sequence SVSSGGASLGSR.

This sequence belongs to the DNA mismatch repair MutL/HexB family.

This protein is involved in the repair of mismatches in DNA. It is required for dam-dependent methyl-directed DNA mismatch repair. May act as a 'molecular matchmaker', a protein that promotes the formation of a stable complex between two or more DNA-binding proteins in an ATP-dependent manner without itself being part of a final effector complex. This chain is DNA mismatch repair protein MutL, found in Pseudoalteromonas translucida (strain TAC 125).